Here is a 283-residue protein sequence, read N- to C-terminus: Serine/threonine-protein phosphatase Pgam5, mitochondrial (283 aa).

The helical transmembrane segment at 7 to 23 (MYGLPSAAVAVGTALLN) threads the bilayer.

It belongs to the phosphoglycerate mutase family. BPG-dependent PGAM subfamily. In terms of assembly, interacts with skn-1.

Its subcellular location is the mitochondrion outer membrane. The catalysed reaction is O-phospho-L-seryl-[protein] + H2O = L-seryl-[protein] + phosphate. It catalyses the reaction O-phospho-L-threonyl-[protein] + H2O = L-threonyl-[protein] + phosphate. In terms of biological role, displays phosphatase activity for serine/threonine residues. Has apparently no phosphoglycerate mutase activity. This Caenorhabditis briggsae protein is Serine/threonine-protein phosphatase Pgam5, mitochondrial (pgam-5).